A 177-amino-acid chain; its full sequence is ATP synthase subunit delta (177 aa).

This sequence belongs to the ATPase delta chain family. As to quaternary structure, F-type ATPases have 2 components, F(1) - the catalytic core - and F(0) - the membrane proton channel. F(1) has five subunits: alpha(3), beta(3), gamma(1), delta(1), epsilon(1). F(0) has three main subunits: a(1), b(2) and c(10-14). The alpha and beta chains form an alternating ring which encloses part of the gamma chain. F(1) is attached to F(0) by a central stalk formed by the gamma and epsilon chains, while a peripheral stalk is formed by the delta and b chains.

Its subcellular location is the cell inner membrane. Functionally, f(1)F(0) ATP synthase produces ATP from ADP in the presence of a proton or sodium gradient. F-type ATPases consist of two structural domains, F(1) containing the extramembraneous catalytic core and F(0) containing the membrane proton channel, linked together by a central stalk and a peripheral stalk. During catalysis, ATP synthesis in the catalytic domain of F(1) is coupled via a rotary mechanism of the central stalk subunits to proton translocation. Its function is as follows. This protein is part of the stalk that links CF(0) to CF(1). It either transmits conformational changes from CF(0) to CF(1) or is implicated in proton conduction. This is ATP synthase subunit delta from Salmonella agona (strain SL483).